A 96-amino-acid polypeptide reads, in one-letter code: Small ribosomal subunit protein bS6 (96 aa).

It belongs to the bacterial ribosomal protein bS6 family.

Its function is as follows. Binds together with bS18 to 16S ribosomal RNA. This is Small ribosomal subunit protein bS6 from Bacillus cereus (strain ATCC 10987 / NRS 248).